Consider the following 120-residue polypeptide: Meiosis expressed gene 1 protein homolog (120 aa).

Positions 1-45 (MDGLAIGGVSAPMTAERPQQVKKQLSRRTPDAADGRKPTRMERAK) are disordered. A compositionally biased stretch (basic and acidic residues) spans 28 to 45 (RTPDAADGRKPTRMERAK).

It belongs to the MEIG1 family.

This chain is Meiosis expressed gene 1 protein homolog, found in Oxyrrhis marina (Dinoflagellate).